The chain runs to 89 residues: UPF0473 protein Helmi_02360 (89 aa).

This sequence belongs to the UPF0473 family.

This is UPF0473 protein Helmi_02360 from Heliobacterium modesticaldum (strain ATCC 51547 / Ice1).